Here is a 128-residue protein sequence, read N- to C-terminus: Large ribosomal subunit protein bL12 (128 aa).

This sequence belongs to the bacterial ribosomal protein bL12 family. As to quaternary structure, homodimer. Part of the ribosomal stalk of the 50S ribosomal subunit. Forms a multimeric L10(L12)X complex, where L10 forms an elongated spine to which 2 to 4 L12 dimers bind in a sequential fashion. Binds GTP-bound translation factors.

Functionally, forms part of the ribosomal stalk which helps the ribosome interact with GTP-bound translation factors. Is thus essential for accurate translation. The polypeptide is Large ribosomal subunit protein bL12 (Synechococcus sp. (strain CC9902)).